The following is a 114-amino-acid chain: Flagellar hook-basal body complex protein FliE (114 aa).

Belongs to the FliE family.

Its subcellular location is the bacterial flagellum basal body. The polypeptide is Flagellar hook-basal body complex protein FliE (Desulfitobacterium hafniense (strain Y51)).